Reading from the N-terminus, the 175-residue chain is ATP synthase subunit b (175 aa).

A helical transmembrane segment spans residues V18–L38.

The protein belongs to the ATPase B chain family. F-type ATPases have 2 components, F(1) - the catalytic core - and F(0) - the membrane proton channel. F(1) has five subunits: alpha(3), beta(3), gamma(1), delta(1), epsilon(1). F(0) has three main subunits: a(1), b(2) and c(10-14). The alpha and beta chains form an alternating ring which encloses part of the gamma chain. F(1) is attached to F(0) by a central stalk formed by the gamma and epsilon chains, while a peripheral stalk is formed by the delta and b chains.

It is found in the cell inner membrane. Functionally, f(1)F(0) ATP synthase produces ATP from ADP in the presence of a proton or sodium gradient. F-type ATPases consist of two structural domains, F(1) containing the extramembraneous catalytic core and F(0) containing the membrane proton channel, linked together by a central stalk and a peripheral stalk. During catalysis, ATP synthesis in the catalytic domain of F(1) is coupled via a rotary mechanism of the central stalk subunits to proton translocation. In terms of biological role, component of the F(0) channel, it forms part of the peripheral stalk, linking F(1) to F(0). The polypeptide is ATP synthase subunit b (Akkermansia muciniphila (strain ATCC BAA-835 / DSM 22959 / JCM 33894 / BCRC 81048 / CCUG 64013 / CIP 107961 / Muc)).